The following is a 64-amino-acid chain: Conotoxin mr5.3 (64 aa).

The N-terminal stretch at methionine 1–serine 19 is a signal peptide. Residues valine 20 to asparagine 48 constitute a propeptide that is removed on maturation. Residues glutamate 56 and glutamate 60 each carry the 4-carboxyglutamate modification.

Contains 2 disulfide bonds that can be either 'C1-C3, C2-C4' or 'C1-C4, C2-C3', since these disulfide connectivities have been observed for conotoxins with cysteine framework V (for examples, see AC P0DQQ7 and AC P81755). Expressed by the venom duct.

It localises to the secreted. This Conus marmoreus (Marble cone) protein is Conotoxin mr5.3.